Here is a 236-residue protein sequence, read N- to C-terminus: MPTLHIKSEKNAFSNIVLMPGDPVRAKYIAENYLANPVQINDTRLMLAYTGYYKNKKISVMSHGMGIPSASLYVRELILEYNVKKIIRVGTCGTIQNNIKLRDIVISMGASTDSKINRIRFNNHDYAAIADFEMIFHAFSTAKKMNFKVHIGNFFTTDSFYTESEDMLKILKKYNIIGIDMETAGIYAVAAELKAQALSICTVSDHIIKKDAVSSKDRESSFHNMITLSLETTLLL.

An a purine D-ribonucleoside-binding site is contributed by H5. Residues G21, R25, R44, and 88 to 91 contribute to the phosphate site; that span reads RVGT. A purine D-ribonucleoside-binding positions include 180–182 and 204–205; these read DME and SD. Catalysis depends on D205, which acts as the Proton donor.

It belongs to the PNP/UDP phosphorylase family. In terms of assembly, homohexamer; trimer of homodimers.

The catalysed reaction is a purine D-ribonucleoside + phosphate = a purine nucleobase + alpha-D-ribose 1-phosphate. The enzyme catalyses a purine 2'-deoxy-D-ribonucleoside + phosphate = a purine nucleobase + 2-deoxy-alpha-D-ribose 1-phosphate. Functionally, catalyzes the reversible phosphorolytic breakdown of the N-glycosidic bond in the beta-(deoxy)ribonucleoside molecules, with the formation of the corresponding free purine bases and pentose-1-phosphate. This chain is Purine nucleoside phosphorylase DeoD-type, found in Buchnera aphidicola subsp. Schizaphis graminum (strain Sg).